We begin with the raw amino-acid sequence, 785 residues long: 5-methyltetrahydropteroyltriglutamate--homocysteine methyltransferase (785 aa).

5-methyltetrahydropteroyltri-L-glutamate contacts are provided by residues 15–18 and lysine 121; that span reads RELK. L-homocysteine is bound by residues 460–462 and glutamate 513; that span reads IGS. L-methionine is bound by residues 460 to 462 and glutamate 513; that span reads IGS. Residues 544–545 and tryptophan 590 contribute to the 5-methyltetrahydropteroyltri-L-glutamate site; that span reads RC. Aspartate 628 contacts L-homocysteine. Aspartate 628 contacts L-methionine. Glutamate 634 is a 5-methyltetrahydropteroyltri-L-glutamate binding site. Residues histidine 670, cysteine 672, and glutamate 694 each coordinate Zn(2+). Histidine 723 functions as the Proton donor in the catalytic mechanism. Cysteine 755 contributes to the Zn(2+) binding site.

Belongs to the vitamin-B12 independent methionine synthase family. Requires Zn(2+) as cofactor.

The catalysed reaction is 5-methyltetrahydropteroyltri-L-glutamate + L-homocysteine = tetrahydropteroyltri-L-glutamate + L-methionine. It participates in amino-acid biosynthesis; L-methionine biosynthesis via de novo pathway; L-methionine from L-homocysteine (MetE route): step 1/1. In terms of biological role, catalyzes the transfer of a methyl group from 5-methyltetrahydrofolate to homocysteine resulting in methionine formation. This chain is 5-methyltetrahydropteroyltriglutamate--homocysteine methyltransferase, found in Nitratidesulfovibrio vulgaris (strain ATCC 29579 / DSM 644 / CCUG 34227 / NCIMB 8303 / VKM B-1760 / Hildenborough) (Desulfovibrio vulgaris).